Reading from the N-terminus, the 103-residue chain is Small ribosomal subunit protein uS10 (103 aa).

Belongs to the universal ribosomal protein uS10 family. As to quaternary structure, part of the 30S ribosomal subunit.

Involved in the binding of tRNA to the ribosomes. The protein is Small ribosomal subunit protein uS10 of Aliivibrio fischeri (strain ATCC 700601 / ES114) (Vibrio fischeri).